The primary structure comprises 286 residues: Movement protein (286 aa).

It belongs to the tenuiviruses pc4 protein family. As to quaternary structure, interacts with the rice proteins DJA6 and HSP17.9A.

It localises to the host cytoplasm. Transports viral genome to neighboring plant cells directly through plasmosdesmata, without any budding. The movement protein allows efficient cell to cell propagation, by bypassing the host cell wall barrier. The polypeptide is Movement protein (Avena sativa (Oat)).